The following is a 202-amino-acid chain: DNA polymerase III subunit epsilon (202 aa).

The a divalent metal cation site is built by Asp-23 and Glu-25. Residues Asp-23 and Glu-25 each coordinate substrate. His-162 functions as the Proton acceptor in the catalytic mechanism. Asp-167 contributes to the a divalent metal cation binding site. Position 167 (Asp-167) interacts with substrate.

In terms of assembly, DNA polymerase III contains a core (composed of alpha, epsilon and theta chains) that associates with a tau subunit. This core dimerizes to form the POLIII' complex. PolIII' associates with the gamma complex (composed of gamma, delta, delta', psi and chi chains) and with the beta chain to form the complete DNA polymerase III complex. Requires Mg(2+) as cofactor. The cofactor is Mn(2+).

It catalyses the reaction DNA(n) + a 2'-deoxyribonucleoside 5'-triphosphate = DNA(n+1) + diphosphate. In terms of biological role, DNA polymerase III is a complex, multichain enzyme responsible for most of the replicative synthesis in bacteria. The epsilon subunit contain the editing function and is a proofreading 3'-5' exonuclease. The protein is DNA polymerase III subunit epsilon (dnaQ) of Aquifex aeolicus (strain VF5).